Consider the following 331-residue polypeptide: Anthranilate phosphoribosyltransferase (331 aa).

Residues glycine 78, 81–82 (GD), threonine 86, 88–91 (NVST), 106–114 (KHGNYSVSS), and serine 118 each bind 5-phospho-alpha-D-ribose 1-diphosphate. Glycine 78 lines the anthranilate pocket. Mg(2+) is bound at residue serine 90. Asparagine 109 serves as a coordination point for anthranilate. Arginine 164 serves as a coordination point for anthranilate. Aspartate 222 and glutamate 223 together coordinate Mg(2+).

Belongs to the anthranilate phosphoribosyltransferase family. As to quaternary structure, homodimer. Requires Mg(2+) as cofactor.

The enzyme catalyses N-(5-phospho-beta-D-ribosyl)anthranilate + diphosphate = 5-phospho-alpha-D-ribose 1-diphosphate + anthranilate. It functions in the pathway amino-acid biosynthesis; L-tryptophan biosynthesis; L-tryptophan from chorismate: step 2/5. Functionally, catalyzes the transfer of the phosphoribosyl group of 5-phosphorylribose-1-pyrophosphate (PRPP) to anthranilate to yield N-(5'-phosphoribosyl)-anthranilate (PRA). The protein is Anthranilate phosphoribosyltransferase of Haloferax volcanii (strain ATCC 29605 / DSM 3757 / JCM 8879 / NBRC 14742 / NCIMB 2012 / VKM B-1768 / DS2) (Halobacterium volcanii).